The primary structure comprises 142 residues: Large ribosomal subunit protein uL11 (142 aa).

The protein belongs to the universal ribosomal protein uL11 family. Part of the ribosomal stalk of the 50S ribosomal subunit. Interacts with L10 and the large rRNA to form the base of the stalk. L10 forms an elongated spine to which L12 dimers bind in a sequential fashion forming a multimeric L10(L12)X complex. In terms of processing, one or more lysine residues are methylated.

In terms of biological role, forms part of the ribosomal stalk which helps the ribosome interact with GTP-bound translation factors. The protein is Large ribosomal subunit protein uL11 of Idiomarina loihiensis (strain ATCC BAA-735 / DSM 15497 / L2-TR).